Consider the following 908-residue polypeptide: Glutamate receptor ionotropic, kainate 2 (908 aa).

The N-terminal stretch at Met1 to Gly31 is a signal peptide. Residues Thr32–Pro561 are Extracellular-facing. Asn67, Asn73, Asn275, Asn378, Asn412, Asn423, and Asn430 each carry an N-linked (GlcNAc...) asparagine glycan. A disulfide bond links Cys96 and Cys347. 3 residues coordinate L-glutamate: Pro516, Ala518, and Arg523. The N-linked (GlcNAc...) asparagine glycan is linked to Asn546. A helical membrane pass occupies residues Asp562–Ala582. The Cytoplasmic portion of the chain corresponds to Arg583 to Gly638. A helical membrane pass occupies residues Ile639 to Leu659. Residues Thr660 to Asn819 are Extracellular-facing. The L-glutamate site is built by Ala689, Thr690, and Glu738. Residues Cys750 and Cys804 are joined by a disulfide bond. Residue Asn751 is glycosylated (N-linked (GlcNAc...) asparagine). Residues Ile820–Gly840 traverse the membrane as a helical segment. Topologically, residues Glu841–Ala908 are cytoplasmic. 2 positions are modified to phosphoserine; by PKC: Ser846 and Ser868. Lys886 participates in a covalent cross-link: Glycyl lysine isopeptide (Lys-Gly) (interchain with G-Cter in SUMO1).

This sequence belongs to the glutamate-gated ion channel (TC 1.A.10.1) family. GRIK2 subfamily. Homotetramer and heterotetramer with GRIK5. Tetramers may be formed by the dimerization of dimers. Assembles into a kainate-gated homomeric channel that does not bind AMPA. Can form functional heteromeric receptors with GRIK4 and GRIK5. Can form functional heteromeric receptors with GRIK3. Interacts with DLG4. Interacts with NETO2. Interacts (via C-terminus) with KLHL17 (via kelch repeats); the interaction targets GRIK2 for degradation via ubiquitin-proteasome pathway. Post-translationally, sumoylation mediates kainate receptor-mediated endocytosis and regulates synaptic transmission. Sumoylation is enhanced by PIAS3 and desumoylated by SENP1. Ubiquitinated. Ubiquitination regulates the GRIK2 levels at the synapse by leading kainate receptor degradation through proteasome. In terms of processing, phosphorylated by PKC at Ser-868 upon agonist activation, this directly enhance sumoylation. Highest expression is found in the olfactory lobe, piriform cortex, dentate gyrus, hippocampus, granular cell layer of the cerebellum, and in caudate-putamen.

It is found in the cell membrane. The protein localises to the postsynaptic cell membrane. The enzyme catalyses Ca(2+)(in) = Ca(2+)(out). It carries out the reaction Na(+)(in) = Na(+)(out). Its activity is regulated as follows. Cold receptor activity activated by temperatures between 10-19 degrees Celsius. In terms of biological role, ionotropic glutamate receptor that functions as a cation-permeable ligand-gated ion channel, gated by L-glutamate and the glutamatergic agonist kainic acid. L-glutamate acts as an excitatory neurotransmitter at many synapses in the central nervous system. Binding of the excitatory neurotransmitter L-glutamate induces a conformation change, leading to the opening of the cation channel, and thereby converts the chemical signal to an electrical impulse. The receptor then desensitizes rapidly and enters a transient inactive state, characterized by the presence of bound agonist. Modulates cell surface expression of NETO2. In association with GRIK3, involved in presynaptic facilitation of glutamate release at hippocampal mossy fiber synapses. Its function is as follows. Independent of its ionotropic glutamate receptor activity, acts as a thermoreceptor conferring sensitivity to cold temperatures. Functions in dorsal root ganglion neurons. This Rattus norvegicus (Rat) protein is Glutamate receptor ionotropic, kainate 2 (Grik2).